Here is a 623-residue protein sequence, read N- to C-terminus: 1-butanol dehydrogenase (quinone) (623 aa).

Positions 1-28 (MKKSHAKPFALRAIVVATAAALSLPAAA) are cleaved as a signal peptide. Positions 40, 43, and 46 each coordinate Ca(2+). Glu-90 is a pyrroloquinoline quinone binding site. Cys-134 and Cys-135 are oxidised to a cystine. Residues Arg-140, Thr-184, and 202 to 204 (HGS) each bind pyrroloquinoline quinone. Ca(2+) is bound at residue Glu-208. Residues 235–274 (HMGRLNGKDSTPTGDPKAPSWPDDPNSPTGKVEAWSQGGG) form a disordered region. Residues Asn-295 and Asp-345 each contribute to the Ca(2+) site. Asp-345 (proton acceptor) is an active-site residue. Arg-374 is a binding site for pyrroloquinoline quinone. Positions 420-440 (GKPIEKDNRPPQPKEGADKGE) are disordered. Ala-592 serves as a coordination point for pyrroloquinoline quinone.

It belongs to the bacterial PQQ dehydrogenase family. It depends on pyrroloquinoline quinone as a cofactor. The cofactor is Ca(2+).

It is found in the periplasm. It carries out the reaction butan-1-ol + a quinone = butanal + a quinol. Involved in the metabolism of butane. May function primarily in energy generation. Catalyzes the oxidation of 1-butanol to 1-butanal. Also able to use 2-butanol and butyraldehyde, although the affinity is comparatively low. The polypeptide is 1-butanol dehydrogenase (quinone) (Thauera butanivorans (strain ATCC 43655 / DSM 2080 / JCM 20651 / CCUG 51053 / NBRC 103042 / IAM 12574 / Bu B1211) (Pseudomonas butanovora)).